We begin with the raw amino-acid sequence, 164 residues long: Transcription elongation factor GreA (164 aa).

Residues 15–76 (DRLKNELDQL…LQELLNSAKV (62 aa)) adopt a coiled-coil conformation.

Belongs to the GreA/GreB family.

Necessary for efficient RNA polymerase transcription elongation past template-encoded arresting sites. The arresting sites in DNA have the property of trapping a certain fraction of elongating RNA polymerases that pass through, resulting in locked ternary complexes. Cleavage of the nascent transcript by cleavage factors such as GreA or GreB allows the resumption of elongation from the new 3'terminus. GreA releases sequences of 2 to 3 nucleotides. In Rhodococcus erythropolis (strain PR4 / NBRC 100887), this protein is Transcription elongation factor GreA.